The chain runs to 130 residues: Gonadotropin subunit beta-1 (130 aa).

The first 18 residues, 1–18 (MRMHFVVMVMLLPALMMA), serve as a signal peptide directing secretion. 5 cysteine pairs are disulfide-bonded: Cys26–Cys74, Cys40–Cys89, Cys51–Cys105, Cys55–Cys107, and Cys110–Cys117. A glycan (N-linked (GlcNAc...) asparagine) is linked at Asn30.

Belongs to the glycoprotein hormones subunit beta family. Heterodimer of an alpha and a beta chain.

It is found in the secreted. Involved in gametogenesis and steroidogenesis. The sequence is that of Gonadotropin subunit beta-1 (cgba) from Cyprinus carpio (Common carp).